Here is a 490-residue protein sequence, read N- to C-terminus: Chromosomal replication initiator protein DnaA (490 aa).

Residues Met-1–Thr-91 form a domain I, interacts with DnaA modulators region. The domain II stretch occupies residues Thr-91–Gln-147. The interval Gly-148–Ala-370 is domain III, AAA+ region. 4 residues coordinate ATP: Gly-192, Gly-194, Lys-195, and Thr-196. The domain IV, binds dsDNA stretch occupies residues Gly-371–Gly-490.

Belongs to the DnaA family. In terms of assembly, oligomerizes as a right-handed, spiral filament on DNA at oriC.

The protein localises to the cytoplasm. Plays an essential role in the initiation and regulation of chromosomal replication. ATP-DnaA binds to the origin of replication (oriC) to initiate formation of the DNA replication initiation complex once per cell cycle. Binds the DnaA box (a 9 base pair repeat at the origin) and separates the double-stranded (ds)DNA. Forms a right-handed helical filament on oriC DNA; dsDNA binds to the exterior of the filament while single-stranded (ss)DNA is stabiized in the filament's interior. The ATP-DnaA-oriC complex binds and stabilizes one strand of the AT-rich DNA unwinding element (DUE), permitting loading of DNA polymerase. After initiation quickly degrades to an ADP-DnaA complex that is not apt for DNA replication. Binds acidic phospholipids. The protein is Chromosomal replication initiator protein DnaA of Caulobacter vibrioides (strain ATCC 19089 / CIP 103742 / CB 15) (Caulobacter crescentus).